Consider the following 247-residue polypeptide: 1-(5-phosphoribosyl)-5-[(5-phosphoribosylamino)methylideneamino] imidazole-4-carboxamide isomerase (247 aa).

The active-site Proton acceptor is aspartate 8. The active-site Proton donor is aspartate 130.

The protein belongs to the HisA/HisF family.

Its subcellular location is the cytoplasm. It carries out the reaction 1-(5-phospho-beta-D-ribosyl)-5-[(5-phospho-beta-D-ribosylamino)methylideneamino]imidazole-4-carboxamide = 5-[(5-phospho-1-deoxy-D-ribulos-1-ylimino)methylamino]-1-(5-phospho-beta-D-ribosyl)imidazole-4-carboxamide. It functions in the pathway amino-acid biosynthesis; L-histidine biosynthesis; L-histidine from 5-phospho-alpha-D-ribose 1-diphosphate: step 4/9. This Stutzerimonas stutzeri (strain A1501) (Pseudomonas stutzeri) protein is 1-(5-phosphoribosyl)-5-[(5-phosphoribosylamino)methylideneamino] imidazole-4-carboxamide isomerase.